The primary structure comprises 421 residues: 5-hydroxytryptamine receptor 1A (421 aa).

Residues 1-38 are Extracellular-facing; the sequence is MDMFSLGQGNNTTTSLEPFGTGGNDTGLSNVTFSYQVI. 4 N-linked (GlcNAc...) asparagine glycosylation sites follow: Asn10, Asn11, Asn24, and Asn30. Residues 39 to 59 traverse the membrane as a helical segment; that stretch reads TSLLLGTLIFCAVLGNACVVA. At 60–73 the chain is on the cytoplasmic side; it reads AIALERSLQNVANY. The helical transmembrane segment at 74–98 threads the bilayer; that stretch reads LIGSLAVTDLMVSVLVLPMAALYQV. Residues 99 to 107 lie on the Extracellular side of the membrane; that stretch reads LNKWTLGQV. The chain crosses the membrane as a helical span at residues 108–132; sequence TCDLFIALDVLCCTSSILHLCAIAL. Residues Cys109 and Cys187 are joined by a disulfide bond. Serotonin contacts are provided by Asp116 and Cys120. The short motif at 133-135 is the DRY motif; important for ligand-induced conformation changes element; the sequence is DRY. At 133-152 the chain is on the cytoplasmic side; it reads DRYWAITDPIDYVNKRTPRR. A helical membrane pass occupies residues 153-174; that stretch reads AAALISLTWLIGFLISIPPMLG. At 175-193 the chain is on the extracellular side; that stretch reads WRTPEDRSNPNECTISKDH. The helical transmembrane segment at 194-216 threads the bilayer; it reads GYTIYSTFGAFYIPLLLMLVLYG. The Cytoplasmic segment spans residues 217–346; that stretch reads RIFRAARFRI…LARERKTVKT (130 aa). Residues 237-268 are disordered; it reads GAGTSFGTSSAPPPKKSLNGQPGSGDCRRSAE. 1D-myo-inositol 4-phosphate contacts are provided by Thr314, Lys345, Thr346, and Gly352. A helical transmembrane segment spans residues 347–370; sequence LGIIMGTFILCWLPFFIVALVLPF. The Extracellular segment spans residues 371–378; that stretch reads CESSCHMP. Residues 379 to 403 form a helical membrane-spanning segment; it reads ELLGAIINWLGYSNSLLNPVIYAYF. The NPxxY motif; important for ligand-induced conformation changes and signaling motif lies at 396–400; sequence NPVIY. 3 residues coordinate 1D-myo-inositol 4-phosphate: Phe403, Asn404, and Lys405. Topologically, residues 404–421 are cytoplasmic; sequence NKDFQNAFKKIIKCKFCR.

This sequence belongs to the G-protein coupled receptor 1 family. 5-hydroxytryptamine receptor subfamily. HTR1A sub-subfamily. As to quaternary structure, heterodimer; heterodimerizes with GPER1. Interacts with YIF1B. Interacts with GPR39 and GALR1. Most abundantly expressed in midbrain, in dorsal raphe and hippocampus. Detected at lower levels in amygdala and brain cortex.

It localises to the cell membrane. It is found in the cell projection. The protein resides in the dendrite. With respect to regulation, G-protein coupled receptor activity is regulated by lipids: phosphatidylinositol 4-phosphate increases HTR1A-mediated activity. Plays a role in the regulation of dopamine and 5-hydroxytryptamine levels in the brain, and thereby affects neural activity, mood and behavior. Plays a role in the response to anxiogenic stimuli. Its function is as follows. G-protein coupled receptor for 5-hydroxytryptamine (serotonin). Also functions as a receptor for various drugs and psychoactive substances. Ligand binding causes a conformation change that triggers signaling via guanine nucleotide-binding proteins (G proteins) and modulates the activity of downstream effectors, such as adenylate cyclase. HTR1A is coupled to G(i)/G(o) G alpha proteins and mediates inhibitory neurotransmission: signaling inhibits adenylate cyclase activity and activates a phosphatidylinositol-calcium second messenger system that regulates the release of Ca(2+) ions from intracellular stores. Beta-arrestin family members regulate signaling by mediating both receptor desensitization and resensitization processes. The sequence is that of 5-hydroxytryptamine receptor 1A (Htr1a) from Mus musculus (Mouse).